Reading from the N-terminus, the 353-residue chain is Probable peptide ABC transporter ATP-binding protein y4tS (353 aa).

Positions 6–256 constitute an ABC transporter domain; that stretch reads LKVESLTKHY…PVHPYTEALI (251 aa). Residue 49 to 56 participates in ATP binding; that stretch reads GESGCGKS.

It belongs to the ABC transporter superfamily.

The protein resides in the cell inner membrane. Functionally, probably part of a binding-protein-dependent transport system y4tOPQRS for a peptide. Probably responsible for energy coupling to the transport system. The chain is Probable peptide ABC transporter ATP-binding protein y4tS from Sinorhizobium fredii (strain NBRC 101917 / NGR234).